The following is a 173-amino-acid chain: NADH-quinone oxidoreductase subunit B 2 (173 aa).

Residues C42, C43, C107, and C137 each coordinate [4Fe-4S] cluster.

The protein belongs to the complex I 20 kDa subunit family. As to quaternary structure, NDH-1 is composed of 14 different subunits. Subunits NuoB, C, D, E, F, and G constitute the peripheral sector of the complex. [4Fe-4S] cluster is required as a cofactor.

The protein localises to the cell inner membrane. It catalyses the reaction a quinone + NADH + 5 H(+)(in) = a quinol + NAD(+) + 4 H(+)(out). Functionally, NDH-1 shuttles electrons from NADH, via FMN and iron-sulfur (Fe-S) centers, to quinones in the respiratory chain. Couples the redox reaction to proton translocation (for every two electrons transferred, four hydrogen ions are translocated across the cytoplasmic membrane), and thus conserves the redox energy in a proton gradient. The sequence is that of NADH-quinone oxidoreductase subunit B 2 from Anaeromyxobacter dehalogenans (strain 2CP-C).